A 529-amino-acid chain; its full sequence is Peptide chain release factor 3 (529 aa).

A tr-type G domain is found at 11 to 280 (AKRRTFAIIS…GLVEWAPAPM (270 aa)). Residues 20–27 (SHPDAGKT), 88–92 (DTPGH), and 142–145 (NKLD) contribute to the GTP site.

This sequence belongs to the TRAFAC class translation factor GTPase superfamily. Classic translation factor GTPase family. PrfC subfamily.

Its subcellular location is the cytoplasm. Increases the formation of ribosomal termination complexes and stimulates activities of RF-1 and RF-2. It binds guanine nucleotides and has strong preference for UGA stop codons. It may interact directly with the ribosome. The stimulation of RF-1 and RF-2 is significantly reduced by GTP and GDP, but not by GMP. The chain is Peptide chain release factor 3 from Yersinia pestis bv. Antiqua (strain Antiqua).